Here is a 325-residue protein sequence, read N- to C-terminus: Probable cell division protein WhiA (325 aa).

Residues 280–313 (SLKELGSMLKNPLGKSGVNHRLRKIDKIAEELRK) constitute a DNA-binding region (H-T-H motif).

The protein belongs to the WhiA family.

In terms of biological role, involved in cell division and chromosome segregation. The sequence is that of Probable cell division protein WhiA from Caldicellulosiruptor saccharolyticus (strain ATCC 43494 / DSM 8903 / Tp8T 6331).